Here is a 254-residue protein sequence, read N- to C-terminus: MAAYKLVLIRHGESAWNLENRFSGWYDADLSPAGHEEAKRGGQALRDAGYEFDICFTSVQKRAIRTLWTVLDAIDQMWLPVVRTWRLNERHYGGLTGLNKAETAAKHGEAQVKIWRRSYDVPPPPMEPDHPFYSNISKDRRYADLTEDQLPSCESLKDTIARALPFWNEEIVPQIKEGKRVLIAAHGNSLRGIVKHLEGLSEEAIMELNLPTGIPIVYELDKNLKPIKPMQFLGDEETVRKAMEAVAAQGKVKK.

Residues 10–17 (RHGESAWN) and 23–24 (SG) each bind substrate. The Tele-phosphohistidine intermediate role is filled by histidine 11. Phosphoserine is present on residues serine 14 and serine 23. Tyrosine 26 carries the post-translational modification Phosphotyrosine. At serine 31 the chain carries Phosphoserine. Substrate-binding positions include arginine 62, 89–92 (ERHY), and lysine 100. Catalysis depends on glutamate 89, which acts as the Proton donor/acceptor. An N6-acetyllysine modification is found at lysine 106. 116 to 117 (RR) serves as a coordination point for substrate. A Phosphoserine modification is found at serine 118. Substrate is bound at residue 187–188 (GN). At lysine 251 the chain carries N6-acetyllysine; alternate. Lysine 251 is subject to N6-succinyllysine; alternate. Residues lysine 253 and lysine 254 each carry the N6-acetyllysine modification.

The protein belongs to the phosphoglycerate mutase family. BPG-dependent PGAM subfamily. As to quaternary structure, homodimer. In terms of processing, acetylated at Lys-253, Lys-253 and Lys-254 under high glucose condition. Acetylation increases catalytic activity. Under glucose restriction SIRT1 levels dramatically increase and it deacetylates the enzyme.

It catalyses the reaction (2R)-2-phosphoglycerate = (2R)-3-phosphoglycerate. The catalysed reaction is (2R)-3-phospho-glyceroyl phosphate = (2R)-2,3-bisphosphoglycerate + H(+). Its function is as follows. Catalyzes the interconversion of 2-phosphoglycerate and 3-phosphoglyceratea crucial step in glycolysis, by using 2,3-bisphosphoglycerate. Also catalyzes the interconversion of (2R)-2,3-bisphosphoglycerate and (2R)-3-phospho-glyceroyl phosphate. The polypeptide is Phosphoglycerate mutase 1 (Mus musculus (Mouse)).